A 179-amino-acid polypeptide reads, in one-letter code: Ribosome-recycling factor (179 aa).

Belongs to the RRF family.

The protein localises to the cytoplasm. In terms of biological role, responsible for the release of ribosomes from messenger RNA at the termination of protein biosynthesis. May increase the efficiency of translation by recycling ribosomes from one round of translation to another. This Chlamydia trachomatis serovar D (strain ATCC VR-885 / DSM 19411 / UW-3/Cx) protein is Ribosome-recycling factor.